We begin with the raw amino-acid sequence, 286 residues long: Protein WVD2-like 1 (286 aa).

The interval E31–D101 is disordered. T32 is modified (phosphothreonine). Residues V38 to L47 are compositionally biased toward basic and acidic residues. Residues A131 to K182 are a coiled coil. Residues N186 to A286 form a disordered region. Polar residues predominate over residues T234–Q247.

It belongs to the TPX2 family.

The protein resides in the cytoplasm. It is found in the cytoskeleton. In terms of biological role, microtubule-associated protein (MAP) that regulates the orientation of interphase cortical microtubules. Modulates both rotational polarity and anisotropic cell expansion during organ growth. Promotes clockwise root and etiolated hypocotyls coiling, clockwise leaf curling, but left-handed petiole twisting. The protein is Protein WVD2-like 1 (WDL1) of Arabidopsis thaliana (Mouse-ear cress).